The following is a 357-amino-acid chain: MSGPSSWRRAATVMLAAGWTHSSPAGFRLLLLQRSQNQRFIPGAHVFPGGVLDAADSSPDWVRLFAPRHTPPRFGLGPEPPRQPPFPGLSHGDADPAALPDDVALRICAIRETFEEAGVLLLRPRDADPASQEPSQALSPPAGLAEWRSRVRSDPRCFLQLCAHLDCTPDIWALHDWGGWLTPYGRITRRFDTTFLLCCLRDTPRVEPDLAEVVGYQWLSPSEATECFLSKEIWLAPPQFYEIRRLDNFASLSALYRFCSDRPLEGGEKWLPIILLTSDGTIHLLPGDELYVKDSDFLEKNMSTDKKTEEIVKEGKVLNRVVIHSPYVYEIYMTLPSENKHVYPRNYVVNKRCTAHL.

One can recognise a Nudix hydrolase domain in the interval 10 to 242 (AATVMLAAGW…IWLAPPQFYE (233 aa)). Positions 72-94 (PRFGLGPEPPRQPPFPGLSHGDA) are disordered. Over residues 78–87 (PEPPRQPPFP) the composition is skewed to pro residues. The Nudix box motif lies at 97 to 118 (AALPDDVALRICAIRETFEEAG). Mg(2+) is bound by residues E112 and E116. K300 is modified (N6-succinyllysine). The Microbody targeting signal motif lies at 355-357 (AHL).

The protein belongs to the Nudix hydrolase family. Monomer. Mg(2+) serves as cofactor. Requires Mn(2+) as cofactor.

It localises to the peroxisome. It catalyses the reaction an acyl-CoA + H2O = an acyl-4'-phosphopantetheine + adenosine 3',5'-bisphosphate + 2 H(+). It carries out the reaction CoA + H2O = (R)-4'-phosphopantetheine + adenosine 3',5'-bisphosphate + 2 H(+). The enzyme catalyses hexanoyl-CoA + H2O = hexanoyl-4'-phosphopantetheine + adenosine 3',5'-bisphosphate + 2 H(+). The catalysed reaction is octanoyl-CoA + H2O = S-octanoyl-4'-phosphopantetheine + adenosine 3',5'-bisphosphate + 2 H(+). It catalyses the reaction butanoyl-CoA + H2O = S-butanoyl-4'-phosphopantetheine + adenosine 3',5'-bisphosphate + 2 H(+). It carries out the reaction propanoyl-CoA + H2O = propanoyl-4'-phosphopantetheine + adenosine 3',5'-bisphosphate + 2 H(+). The enzyme catalyses malonyl-CoA + H2O = malonyl-4'-phosphopantetheine + adenosine 3',5'-bisphosphate + 2 H(+). The catalysed reaction is succinyl-CoA + H2O = succinyl-4'-phosphopantetheine + adenosine 3',5'-bisphosphate + 2 H(+). It catalyses the reaction choloyl-CoA + H2O = S-choloyl-4'-phosphopantetheine + adenosine 3',5'-bisphosphate + 2 H(+). It carries out the reaction 4,8-dimethylnonanoyl-CoA + H2O = S-(4,8-dimethylnonanoyl)-4'-phosphopantetheine + adenosine 3',5'-bisphosphate + 2 H(+). The enzyme catalyses (9Z,12Z,15Z)-octadecatrienoyl-CoA + H2O = S-(9Z,12Z,15Z-octadecatrienoyl)-4'-phosphopantetheine + adenosine 3',5'-bisphosphate + 2 H(+). The catalysed reaction is (9Z,12Z)-octadecadienoyl-CoA + H2O = S-(9Z,12Z-octadecadienoyl)-4'-phosphopantetheine + adenosine 3',5'-bisphosphate + 2 H(+). It catalyses the reaction (9Z)-hexadecenoyl-CoA + H2O = S-(9Z-hexadecenoyl)-4'-phosphopantetheine + adenosine 3',5'-bisphosphate + 2 H(+). It carries out the reaction (9Z)-tetradecenoyl-CoA + H2O = S-(9Z-tetradecenoyl)-4'-phosphopantetheine + adenosine 3',5'-bisphosphate + 2 H(+). The enzyme catalyses (6Z)-octenoyl-CoA + H2O = S-(6Z-octenoyl)-4'-phosphopantetheine + adenosine 3',5'-bisphosphate + 2 H(+). The catalysed reaction is hexadecanoyl-CoA + H2O = S-hexadecanoyl-4'-phosphopantetheine + adenosine 3',5'-bisphosphate + 2 H(+). It catalyses the reaction tetradecanoyl-CoA + H2O = tetradecanoyl-4'-phosphopantetheine + adenosine 3',5'-bisphosphate + 2 H(+). It carries out the reaction dodecanoyl-CoA + H2O = S-dodecanoyl-4'-phosphopantetheine + adenosine 3',5'-bisphosphate + 2 H(+). The enzyme catalyses a 5'-end CoA-ribonucleoside in mRNA + H2O = a 5'-end phospho-adenosine-phospho-ribonucleoside in mRNA + (R)-4'-phosphopantetheine + 2 H(+). Fatty acyl-coenzyme A (CoA) diphosphatase that hydrolyzes fatty acyl-CoA to yield acyl-4'-phosphopantetheine and adenosine 3',5'-bisphosphate. Mediates the hydrolysis of a wide range of CoA esters, including choloyl-CoA and branched-chain fatty-acyl-CoA esters and at low substrate concentrations medium and long-chain fatty-acyl-CoA esters are the primary substrates. Highest activity seen with medium-chain acyl-CoA esters and higher rates of activity seen with the unsaturated acyl-CoA esters compared with the saturated esters. Exhibits decapping activity towards dpCoA-capped RNAs in vitro. The chain is Acyl-coenzyme A diphosphatase NUDT19 (Nudt19) from Mus caroli (Ryukyu mouse).